Reading from the N-terminus, the 296-residue chain is L-isoleucine 3(1)-dioxygenase (296 aa).

Fe cation contacts are provided by H176, D178, and H267.

This sequence belongs to the iron/ascorbate-dependent oxidoreductase family. L-ascorbate is required as a cofactor. The cofactor is Fe(2+).

The enzyme catalyses L-isoleucine + 2-oxoglutarate + O2 = 3(1)-hydroxy-L-isoleucine + succinate + CO2. Catalyzes the hydroxylation of L-isoleucine at the C-4' position to form L-4'-hydroxyisoleucine (4'-HIL). Exhibits low activity with L-valine and L-methionine. This chain is L-isoleucine 3(1)-dioxygenase, found in Pantoea ananatis (strain AJ13355).